Reading from the N-terminus, the 74-residue chain is Metallothionein-like protein type 2 (74 aa).

It belongs to the metallothionein superfamily. Type 15 family.

Its function is as follows. Metallothioneins have a high content of cysteine residues that bind various heavy metals. This chain is Metallothionein-like protein type 2, found in Nicotiana plumbaginifolia (Leadwort-leaved tobacco).